The chain runs to 429 residues: UDP-N-acetylglucosamine 1-carboxyvinyltransferase (429 aa).

A phosphoenolpyruvate-binding site is contributed by 22–23; that stretch reads KN. Arg-102 serves as a coordination point for UDP-N-acetyl-alpha-D-glucosamine. The active-site Proton donor is Cys-126. At Cys-126 the chain carries 2-(S-cysteinyl)pyruvic acid O-phosphothioketal. Residues 131–135, Asp-316, and Ile-338 contribute to the UDP-N-acetyl-alpha-D-glucosamine site; that span reads RPVDL.

The protein belongs to the EPSP synthase family. MurA subfamily.

Its subcellular location is the cytoplasm. The enzyme catalyses phosphoenolpyruvate + UDP-N-acetyl-alpha-D-glucosamine = UDP-N-acetyl-3-O-(1-carboxyvinyl)-alpha-D-glucosamine + phosphate. It participates in cell wall biogenesis; peptidoglycan biosynthesis. Cell wall formation. Adds enolpyruvyl to UDP-N-acetylglucosamine. The polypeptide is UDP-N-acetylglucosamine 1-carboxyvinyltransferase (Rhodopseudomonas palustris (strain BisB5)).